Here is a 205-residue protein sequence, read N- to C-terminus: GTP cyclohydrolase-2 (205 aa).

Residue 49–53 participates in GTP binding; sequence RVHSE. Zn(2+) contacts are provided by C54, C65, and C67. GTP-binding positions include Q70, 92–94, and T114; that span reads EGR. D126 acts as the Proton acceptor in catalysis. The active-site Nucleophile is the R128. Residues T149 and K154 each contribute to the GTP site.

This sequence belongs to the GTP cyclohydrolase II family. Zn(2+) serves as cofactor.

The catalysed reaction is GTP + 4 H2O = 2,5-diamino-6-hydroxy-4-(5-phosphoribosylamino)-pyrimidine + formate + 2 phosphate + 3 H(+). It participates in cofactor biosynthesis; riboflavin biosynthesis; 5-amino-6-(D-ribitylamino)uracil from GTP: step 1/4. In terms of biological role, catalyzes the conversion of GTP to 2,5-diamino-6-ribosylamino-4(3H)-pyrimidinone 5'-phosphate (DARP), formate and pyrophosphate. The sequence is that of GTP cyclohydrolase-2 from Pseudomonas syringae pv. tomato (strain ATCC BAA-871 / DC3000).